We begin with the raw amino-acid sequence, 211 residues long: Small ribosomal subunit protein uS3 (211 aa).

A KH type-2 domain is found at 38–106; it reads LRKFIKKAFY…NIELNIIEVK (69 aa).

This sequence belongs to the universal ribosomal protein uS3 family. As to quaternary structure, part of the 30S ribosomal subunit. Forms a tight complex with proteins S10 and S14.

In terms of biological role, binds the lower part of the 30S subunit head. Binds mRNA in the 70S ribosome, positioning it for translation. This chain is Small ribosomal subunit protein uS3, found in Ehrlichia ruminantium (strain Welgevonden).